Consider the following 116-residue polypeptide: uncharacterized protein (116 aa).

This is an uncharacterized protein from Aquifex aeolicus (strain VF5).